We begin with the raw amino-acid sequence, 433 residues long: Signal recognition particle 54 kDa protein (433 aa).

Residues 106-113 (GVEGSGKT), 186-190 (DTAGR), and 244-247 (TKMD) contribute to the GTP site.

This sequence belongs to the GTP-binding SRP family. SRP54 subfamily. Part of the signal recognition particle protein translocation system, which is composed of SRP and FtsY. Archaeal SRP consists of a 7S RNA molecule of 300 nucleotides and two protein subunits: SRP54 and SRP19.

Its subcellular location is the cytoplasm. It carries out the reaction GTP + H2O = GDP + phosphate + H(+). In terms of biological role, involved in targeting and insertion of nascent membrane proteins into the cytoplasmic membrane. Binds to the hydrophobic signal sequence of the ribosome-nascent chain (RNC) as it emerges from the ribosomes. The SRP-RNC complex is then targeted to the cytoplasmic membrane where it interacts with the SRP receptor FtsY. This Pyrobaculum aerophilum (strain ATCC 51768 / DSM 7523 / JCM 9630 / CIP 104966 / NBRC 100827 / IM2) protein is Signal recognition particle 54 kDa protein.